The sequence spans 460 residues: MNWLETALSTSSLKEAPAVAVLHLGCEKNRVDTEHMLGLLAQAGYRVEGDEDSADYVIVNTCSFIEAARRESVSTLMELAVQGKKIIIAGCLAQHFQEELLREIPEAVAIVGTGDYHQIVQVIQRAERGERVNAVTSSLDYIADETVPRYRTTHAPVAYLRVAEGCDYRCSFCIIPHLRGKQRSRPIESILREAEQLAAEGVQELILISQITTNYGLDLYGEPRLAELIRALGQIPIPWIRMLYAYPTGITPAVVEAIQETPNFLLYLDLPLQHSHPAILKAMNRPWQGQVNDRLIERLRQALPKAVLRTSFIVGFPGETEEHFQHLLEFVQRHQFDHVGVFTFSPEEGTPAYHLPQQVPEPLKEERRARLMQLQQGIAFRRNREQVGQVVPVLLEQENPRTGEWIGRSPRFAPEVDGVVYVRGPGSLGSLVPVQITRAEPYDLFGQVVEAPAGFSWSGR.

Residues 17–128 form the MTTase N-terminal domain; the sequence is PAVAVLHLGC…IVQVIQRAER (112 aa). Positions 26, 62, 91, 166, 170, and 173 each coordinate [4Fe-4S] cluster. In terms of domain architecture, Radical SAM core spans 152 to 381; the sequence is TTHAPVAYLR…MQLQQGIAFR (230 aa). The TRAM domain occupies 384-450; sequence REQVGQVVPV…PYDLFGQVVE (67 aa).

Belongs to the methylthiotransferase family. RimO subfamily. [4Fe-4S] cluster serves as cofactor.

The protein localises to the cytoplasm. The catalysed reaction is L-aspartate(89)-[ribosomal protein uS12]-hydrogen + (sulfur carrier)-SH + AH2 + 2 S-adenosyl-L-methionine = 3-methylsulfanyl-L-aspartate(89)-[ribosomal protein uS12]-hydrogen + (sulfur carrier)-H + 5'-deoxyadenosine + L-methionine + A + S-adenosyl-L-homocysteine + 2 H(+). Catalyzes the methylthiolation of an aspartic acid residue of ribosomal protein uS12. This Synechococcus sp. (strain JA-3-3Ab) (Cyanobacteria bacterium Yellowstone A-Prime) protein is Ribosomal protein uS12 methylthiotransferase RimO.